A 126-amino-acid chain; its full sequence is MKQVSQLRVRKLGEHIRAEIAQLIMLGKIKDPRVSPFLSVNWVDVSGGMVCARVYVSSFMGKYKTKQGVQGLESAAGFIRSVLAKKLRLRQCPRLSFVYDESVRDGFSLSRKIDRLESGGVQTEHA.

This sequence belongs to the RbfA family. Monomer. Binds 30S ribosomal subunits, but not 50S ribosomal subunits or 70S ribosomes.

It is found in the cytoplasm. Its function is as follows. One of several proteins that assist in the late maturation steps of the functional core of the 30S ribosomal subunit. Associates with free 30S ribosomal subunits (but not with 30S subunits that are part of 70S ribosomes or polysomes). Required for efficient processing of 16S rRNA. May interact with the 5'-terminal helix region of 16S rRNA. This is Ribosome-binding factor A from Treponema pallidum (strain Nichols).